A 131-amino-acid chain; its full sequence is Large ribosomal subunit protein bL19 (131 aa).

This sequence belongs to the bacterial ribosomal protein bL19 family.

Its function is as follows. This protein is located at the 30S-50S ribosomal subunit interface and may play a role in the structure and function of the aminoacyl-tRNA binding site. The chain is Large ribosomal subunit protein bL19 from Anaeromyxobacter sp. (strain K).